Here is a 332-residue protein sequence, read N- to C-terminus: Delta-aminolevulinic acid dehydratase (332 aa).

The active-site Schiff-base intermediate with substrate is the Lys-202. 5-aminolevulinate is bound by residues Arg-212 and Lys-225. The active-site Schiff-base intermediate with substrate is the Lys-256. Residues Ser-282 and Tyr-321 each coordinate 5-aminolevulinate.

Belongs to the ALAD family. In terms of assembly, homohexamer.

The catalysed reaction is 2 5-aminolevulinate = porphobilinogen + 2 H2O + H(+). Its pathway is porphyrin-containing compound metabolism; protoporphyrin-IX biosynthesis; coproporphyrinogen-III from 5-aminolevulinate: step 1/4. In terms of biological role, catalyzes an early step in the biosynthesis of tetrapyrroles. Binds two molecules of 5-aminolevulinate per subunit, each at a distinct site, and catalyzes their condensation to form porphobilinogen. The chain is Delta-aminolevulinic acid dehydratase (hemB) from Rhodobacter capsulatus (Rhodopseudomonas capsulata).